The sequence spans 148 residues: U5-hexatoxin-Hi1a (148 aa).

An N-terminal signal peptide occupies residues 1–21 (MNFSVVAVALVVVLTVHFTDG). A propeptide spanning residues 22-38 (QETSSSLPSPPSPLPGR) is cleaved from the precursor. The interval 125–148 (TPSTTVTTPTPTTETPTTETPSTP) is disordered.

Post-translationally, contains 2 disulfide bonds. In terms of tissue distribution, expressed by the venom gland.

It localises to the secreted. Its function is as follows. Probable ion channel inhibitor. This is U5-hexatoxin-Hi1a from Hadronyche infensa (Fraser island funnel-web spider).